A 413-amino-acid polypeptide reads, in one-letter code: MEIIRPMRVAIVAESFLPNVNGVTNSVLRVLEHLKANGHDALVIAPGARDFEEEIGHYLGFEIVRVPTVRVPLIDSLPIGVPLPSVTSVLREYNPDIIHLASPFVLGGAAAFAARQLRIPAIAIYQTDVAGFSQRYHLAPLATASWEWIKTVHNMCQRTLAPSSMSIDELRDHGINDIFHWARGVDSKRFHPGKRSVALRKSWDPSGAKKIVGFVGRLASEKGVECLAGLSGRSDIQLVIVGDGPEAKYLQEMMPDAIFTGALGGEELATTYASLDLFVHPGEFETFCQAIQEAQASGVPTIGPRAGGPIDLINEGVNGLLLDVVDFKETLPAAAEWILDDSRHSEMCAAAWEGVKDKTWEALCTQLLQHYADVIALSQRIPLTFFGPSAEVAKLPLWVARALGVRTRISIEA.

It belongs to the glycosyltransferase group 1 family.

Its pathway is phospholipid metabolism; phosphatidylinositol metabolism. Catalyzes the addition of a mannose residue from GDP-D-mannose to GlcAGroAc2 to generate 1,2-di-O-C16/C18:1-(alpha-D-mannopyranosyl)-(1-4)-(alpha-D-glucopyranosyluronic acid)-(1-3)-glycerol(ManGlcAGroAc2). The chain is GDP-mannose-dependent alpha-mannosyltransferase (mgtA) from Corynebacterium glutamicum (strain ATCC 13032 / DSM 20300 / JCM 1318 / BCRC 11384 / CCUG 27702 / LMG 3730 / NBRC 12168 / NCIMB 10025 / NRRL B-2784 / 534).